Consider the following 230-residue polypeptide: UPF0173 metal-dependent hydrolase Mbar_A3716 (230 aa).

Belongs to the UPF0173 family.

This Methanosarcina barkeri (strain Fusaro / DSM 804) protein is UPF0173 metal-dependent hydrolase Mbar_A3716.